The primary structure comprises 380 residues: Acid phosphatase-like protein XcAP-3 (380 aa).

A signal peptide spans 1 to 19 (MKATILLFLVLAVVQLSTA). 3 cysteine pairs are disulfide-bonded: Cys147/Cys374, Cys167/Cys221, and Cys347/Cys351.

Belongs to the histidine acid phosphatase family.

It localises to the secreted. Probably modulates blood feeding of fleas on vertebrate species by binding and sequestering different mediators involved in the host response. Binds histamine. Binds leukotriene C4. Does not bind serotonin, adrenaline, noradrenaline, leukotriene B4, leukotriene D4, leukotriene E4, ADP, and stable analogs of thromboxane A2: U-46619 and cTXA2. The sequence is that of Acid phosphatase-like protein XcAP-3 from Xenopsylla cheopis (Oriental rat flea).